We begin with the raw amino-acid sequence, 315 residues long: Protein sprouty homolog 2 (315 aa).

Residues 1-15 (MEARAQSGNGSQPLL) are compositionally biased toward polar residues. Positions 1–140 (MEARAQSGNG…SEQRLLGSSF (140 aa)) are disordered. Residues 20-32 (DGGRPRGEPDPRD) are compositionally biased toward basic and acidic residues. Positions 108-140 (SRSISTVSSGSRSSTRTSTSSSSSEQRLLGSSF) are enriched in low complexity. The segment at 118 to 315 (SRSSTRTSTS…VPRRNFEKPT (198 aa)) is required for interaction with CAV1. An SPR domain is found at 177-291 (RCEDCGKCKC…CYDRVNRPGC (115 aa)). Residues 178 to 315 (CEDCGKCKCK…VPRRNFEKPT (138 aa)) are required for interaction with TESK1.

It belongs to the sprouty family. As to quaternary structure, forms heterodimers with SPRY1. Forms a tripartite complex containing GAB1, METTL13 and SPRY2. Within the complex interacts with METTL13. Interacts with RAF1. Interacts (via C-terminus) with TESK1 (via C-terminus); the interaction disrupts SPRY2 interaction with GRB2, potentially via disruption of SPRY2 serine dephosphorylation. Interacts with PPP2R1A/PP2A-A and PPP2CA/PP2A-C; the interaction with PPP2CA/PP2A-C is inhibited by interaction with TESK1, possibly by vesicular sequestration of SPRY2. Inhibition of the interaction with the serine/threonine-protein phosphatase 2A (PP2A) holoenzyme results in loss of PP2A-mediated dephosphorylation, resulting in the loss of SPRY2 interaction with GRB2. Interacts with GRB2. Interacts with CBL/C-CBL; the interaction inhibits CBL-mediated ubiquitination of EGFR. Interacts (via C-terminus) with CAV1 (via C-terminus). In terms of processing, cleaved at Pro-144 by the prolyl endopeptidase FAP (seprase) activity (in vitro).

The protein resides in the cytoplasm. The protein localises to the cytoskeleton. Its subcellular location is the cell projection. It localises to the ruffle membrane. Functionally, antagonist of fibroblast growth factor (FGF) pathways via inhibition of FGF-mediated phosphorylation of ERK1/2. Thereby acts as an antagonist of FGF-induced retinal lens fiber differentiation, may inhibit limb bud outgrowth and may negatively modulate respiratory organogenesis. Inhibits TGFB-induced epithelial-to-mesenchymal transition in retinal lens epithelial cells. Inhibits CBL/C-CBL-mediated EGFR ubiquitination. The polypeptide is Protein sprouty homolog 2 (SPRY2) (Pongo abelii (Sumatran orangutan)).